Consider the following 414-residue polypeptide: Serine/threonine transporter SstT (414 aa).

Over 2–15 (TTQRSPGLFRRLAH) the chain is Cytoplasmic. Residues 16-36 (GSLVKQILVGLVLGILLAWIS) traverse the membrane as a helical segment. Residues 37–45 (KPAAEAVGL) are Periplasmic-facing. Residues 46–66 (LGTLFVGALKAVAPILVLMLV) traverse the membrane as a helical segment. The Cytoplasmic portion of the chain corresponds to 67–83 (MASIANHQHGQKTNILP). A helical transmembrane segment spans residues 84 to 104 (ILFLYLLGTFSAALAAVVFSF). Over 105-142 (AFPSTLHLSSSAGDISPPSGIVEVMRGLVMSMVSNPID) the chain is Periplasmic. A helical membrane pass occupies residues 143–163 (ALLKGNYIGILVWAIGLGFAL). Over 164–179 (RHGNETTKNLVNDMSN) the chain is Cytoplasmic. A helical transmembrane segment spans residues 180–200 (AVTFMVKLVIRFAPIGIFGLV). Over 201-217 (SSTLATTGFSTLWGYAQ) the chain is Periplasmic. Residues 218 to 238 (LLVVLVGCMLLVALVVNPLLV) traverse the membrane as a helical segment. At 239-299 (WWKIRRNPFP…VSIPLGATIN (61 aa)) the chain is on the cytoplasmic side. A helical transmembrane segment spans residues 300-320 (MAGAAITITVLTLAAVNTLGI). The Periplasmic segment spans residues 321–331 (PVDLPTALLLS). The helical transmembrane segment at 332-352 (VVASLCACGASGVAGGSLLLI) threads the bilayer. At 353–414 (PLACNMFGIS…DRLANSALRN (62 aa)) the chain is on the cytoplasmic side.

Belongs to the dicarboxylate/amino acid:cation symporter (DAACS) (TC 2.A.23) family.

The protein resides in the cell inner membrane. The catalysed reaction is L-serine(in) + Na(+)(in) = L-serine(out) + Na(+)(out). The enzyme catalyses L-threonine(in) + Na(+)(in) = L-threonine(out) + Na(+)(out). Functionally, involved in the import of serine and threonine into the cell, with the concomitant import of sodium (symport system). The protein is Serine/threonine transporter SstT of Shigella dysenteriae serotype 1 (strain Sd197).